A 323-amino-acid chain; its full sequence is Transcriptional regulator protein Pur-beta-A (323 aa).

Disordered regions lie at residues 1-34, 100-122, and 286-323; these read MADGDSGSERGGSSGGPGGFSQHMSREQETQELA, SPEQIAQASGEDGAGGPGGPRRA, and QERQRDKMYERRGPGDRERSLGPGGGGDDSETEDVDDD. The residue at position 2 (alanine 2) is an N-acetylalanine. Over residues 9 to 19 the composition is skewed to gly residues; that stretch reads ERGGSSGGPGG. The segment covering 24 to 34 has biased composition (basic and acidic residues); it reads MSREQETQELA. A DNA-binding region spans residues 27–257; that stretch reads EQETQELATK…LRVSEVKPSY (231 aa). Basic and acidic residues predominate over residues 286-305; that stretch reads QERQRDKMYERRGPGDRERS. Acidic residues predominate over residues 313 to 323; the sequence is DDSETEDVDDD.

The protein belongs to the PUR DNA-binding protein family.

Its subcellular location is the nucleus. Transcriptional regulator which can act as an activator or a repressor. The polypeptide is Transcriptional regulator protein Pur-beta-A (purb-a) (Xenopus laevis (African clawed frog)).